Consider the following 296-residue polypeptide: Nitrogenase iron protein (296 aa).

13–20 (GKGGIGKS) is an ATP binding site. C101 lines the [4Fe-4S] cluster pocket. At R104 the chain carries ADP-ribosylarginine; by dinitrogenase reductase ADP-ribosyltransferase. A [4Fe-4S] cluster-binding site is contributed by C135.

It belongs to the NifH/BchL/ChlL family. In terms of assembly, homodimer. [4Fe-4S] cluster serves as cofactor. The reversible ADP-ribosylation of Arg-104 inactivates the nitrogenase reductase and regulates nitrogenase activity.

It carries out the reaction N2 + 8 reduced [2Fe-2S]-[ferredoxin] + 16 ATP + 16 H2O = H2 + 8 oxidized [2Fe-2S]-[ferredoxin] + 2 NH4(+) + 16 ADP + 16 phosphate + 6 H(+). Its function is as follows. The key enzymatic reactions in nitrogen fixation are catalyzed by the nitrogenase complex, which has 2 components: the iron protein and the molybdenum-iron protein. The protein is Nitrogenase iron protein (nifH) of Leptolyngbya boryana (Plectonema boryanum).